The primary structure comprises 315 residues: T-box transcription factor tbx-8 (315 aa).

The T-box DNA-binding region spans 11-195 (EDQDKLWNLF…FNPFAKGFRE (185 aa)). Basic and acidic residues predominate over residues 193–203 (FREGSQSDRKR). 2 disordered regions span residues 193 to 235 (FREG…SVSP) and 293 to 315 (PPPSLKNVKKEEQEDIEQEINVV). The segment covering 205–225 (SPSADDSTTDESSSQVSSPQP) has biased composition (low complexity). Residues 305 to 315 (QEDIEQEINVV) show a composition bias toward acidic residues.

The protein localises to the nucleus. Transcription factor. Involved in the control of early morphogenesis of the intestine, hypodermis and body-wall muscle. Involved in regulating expression of vab-7. Appears to have partially redundant function to tbx-9. This chain is T-box transcription factor tbx-8 (tbx-8), found in Caenorhabditis elegans.